The sequence spans 758 residues: MLNQELELSLNMAFARAREHRHEFMTVEHLLLALLSNPSAREALEACSVDLVALRQELEAFIEQTTPVLPASEEERDTQPTLSFQRVLQRAVFHVQSSGRNEVTGANVLVAIFSEQESQAAYLLRKHEVSRLDVVNFISHGTRKDEPTQSSDPGSQPNSEEQAGGEERMENFTTNLNQLARVGGIDPLIGREKELERAIQVLCRRRKNNPLLVGESGVGKTAIAEGLAWRIVQGDVPEVMADCTIYSLDIGSLLAGTKYRGDFEKRFKALLKQLEQDTNSILFIDEIHTIIGAGAASGGQVDAANLIKPLLSSGKIRVIGSTTYQEFSNIFEKDRALARRFQKIDITEPSIEETVQIINGLKPKYEAHHDVRYTAKAVRAAVELAVKYINDRHLPDKAIDVIDEAGARARLMPVSKRKKTVNVADIESVVARIARIPEKSVSQSDRDTLKNLGDRLKMLVFGQDKAIEALTEAIKMARAGLGHEHKPVGSFLFAGPTGVGKTEVTVQLSKALGIELLRFDMSEYMERHTVSRLIGAPPGYVGFDQGGLLTDAVIKHPHAVLLLDEIEKAHPDVFNILLQVMDNGTLTDNNGRKADFRNVVLVMTTNAGVRETERKSIGLIHQDNSTDAMEEIKKIFTPEFRNRLDNIIWFDHLSTDVIHQVVDKFIVELQVQLDQKGVSLEVSQEARNWLAEKGYDRAMGARPMARVIQDNLKKPLANELLFGSLVDGGQVTVALDKEKNELTYGFQSAQKHKAEAAH.

The 145-residue stretch at 1-145 folds into the Clp R domain; it reads MLNQELELSL…NFISHGTRKD (145 aa). Repeat regions lie at residues 2–65 and 80–145; these read LNQE…IEQT and PTLS…TRKD. Positions 140 to 167 are disordered; the sequence is HGTRKDEPTQSSDPGSQPNSEEQAGGEE. Residues 148-161 are compositionally biased toward polar residues; sequence TQSSDPGSQPNSEE. The i stretch occupies residues 169–417; the sequence is MENFTTNLNQ…RARLMPVSKR (249 aa). ATP is bound by residues 214–221 and 495–502; these read GESGVGKT and GPTGVGKT. An II region spans residues 421–609; it reads VNVADIESVV…VLVMTTNAGV (189 aa).

Belongs to the ClpA/ClpB family. As to quaternary structure, component of the ClpAP complex composed of six ClpA subunits assembled into a hexameric ring in the presence of ATP, and fourteen ClpP subunits arranged in two heptameric rings. Binds to ClpS.

Functionally, ATP-dependent specificity component of the ClpAP protease. It directs the protease to specific substrates. It has unfoldase activity. The primary function of the ClpA-ClpP complex appears to be the degradation of unfolded or abnormal proteins. This is ATP-dependent Clp protease ATP-binding subunit ClpA (clpA) from Escherichia coli O157:H7.